The primary structure comprises 304 residues: ATP phosphoribosyltransferase (304 aa).

Belongs to the ATP phosphoribosyltransferase family. Long subfamily. Mg(2+) is required as a cofactor.

It is found in the cytoplasm. It carries out the reaction 1-(5-phospho-beta-D-ribosyl)-ATP + diphosphate = 5-phospho-alpha-D-ribose 1-diphosphate + ATP. Its pathway is amino-acid biosynthesis; L-histidine biosynthesis; L-histidine from 5-phospho-alpha-D-ribose 1-diphosphate: step 1/9. Feedback inhibited by histidine. Its function is as follows. Catalyzes the condensation of ATP and 5-phosphoribose 1-diphosphate to form N'-(5'-phosphoribosyl)-ATP (PR-ATP). Has a crucial role in the pathway because the rate of histidine biosynthesis seems to be controlled primarily by regulation of HisG enzymatic activity. In Xanthomonas campestris pv. campestris (strain B100), this protein is ATP phosphoribosyltransferase.